The primary structure comprises 361 residues: Peptide chain release factor 1 (361 aa).

Gln-237 is subject to N5-methylglutamine. The span at 285–296 shows a compositional bias: basic and acidic residues; sequence DEKRRSAEESTR. The interval 285–305 is disordered; the sequence is DEKRRSAEESTRRNLVGSGDR.

Belongs to the prokaryotic/mitochondrial release factor family. Post-translationally, methylated by PrmC. Methylation increases the termination efficiency of RF1.

Its subcellular location is the cytoplasm. Peptide chain release factor 1 directs the termination of translation in response to the peptide chain termination codons UAG and UAA. The polypeptide is Peptide chain release factor 1 (Shewanella sediminis (strain HAW-EB3)).